Reading from the N-terminus, the 370-residue chain is Phosphoserine aminotransferase (370 aa).

An L-glutamate-binding site is contributed by R38. Residues W101, T143, D166, and Q189 each coordinate pyridoxal 5'-phosphate. An N6-(pyridoxal phosphate)lysine modification is found at K190. 243-244 contacts pyridoxal 5'-phosphate; that stretch reads NT.

Belongs to the class-V pyridoxal-phosphate-dependent aminotransferase family. SerC subfamily. Homodimer. Pyridoxal 5'-phosphate is required as a cofactor.

Its subcellular location is the cytoplasm. The catalysed reaction is O-phospho-L-serine + 2-oxoglutarate = 3-phosphooxypyruvate + L-glutamate. It carries out the reaction 4-(phosphooxy)-L-threonine + 2-oxoglutarate = (R)-3-hydroxy-2-oxo-4-phosphooxybutanoate + L-glutamate. It participates in amino-acid biosynthesis; L-serine biosynthesis; L-serine from 3-phospho-D-glycerate: step 2/3. The protein operates within cofactor biosynthesis; pyridoxine 5'-phosphate biosynthesis; pyridoxine 5'-phosphate from D-erythrose 4-phosphate: step 3/5. Its function is as follows. Catalyzes the reversible conversion of 3-phosphohydroxypyruvate to phosphoserine and of 3-hydroxy-2-oxo-4-phosphonooxybutanoate to phosphohydroxythreonine. The chain is Phosphoserine aminotransferase (serC) from Methanosarcina barkeri (strain Fusaro / DSM 804).